A 323-amino-acid polypeptide reads, in one-letter code: Phosphate acetyltransferase (323 aa).

The protein belongs to the phosphate acetyltransferase and butyryltransferase family.

The protein localises to the cytoplasm. The catalysed reaction is acetyl-CoA + phosphate = acetyl phosphate + CoA. It functions in the pathway metabolic intermediate biosynthesis; acetyl-CoA biosynthesis; acetyl-CoA from acetate: step 2/2. This is Phosphate acetyltransferase (pta) from Bacillus subtilis (strain 168).